Reading from the N-terminus, the 89-residue chain is Large ribosomal subunit protein bL27 (89 aa).

The interval 1–20 (MAHKKAGGSSRNGRDSAGRR) is disordered.

It belongs to the bacterial ribosomal protein bL27 family.

This chain is Large ribosomal subunit protein bL27, found in Jannaschia sp. (strain CCS1).